We begin with the raw amino-acid sequence, 398 residues long: Mitochondrial protein import protein mas5 (398 aa).

Residues 7-88 (GYYKVLELSP…KKKKEYDSGM (82 aa)) enclose the J domain. The CR-type zinc-finger motif lies at 139-219 (GKVSKFNVRT…CNGAEYIQDK (81 aa)). 144–146 (FNV) contacts substrate. The Zn(2+) site is built by Cys-152, Cys-155, Cys-166, Cys-169, Cys-192, Cys-195, Cys-207, and Cys-210. CXXCXGXG motif repeat units lie at residues 152 to 159 (CTTCDGKG), 166 to 173 (CKKCNGNG), 192 to 199 (CDGCDGSG), and 207 to 214 (CSTCNGAE). Residues 221–222 (MF) and 253–255 (VIF) contribute to the substrate site. The interval 367–386 (FGSMPEPERDHEDASEEGAQ) is disordered.

The protein belongs to the DnaJ family. Homodimer. It depends on Zn(2+) as a cofactor.

Its subcellular location is the cytoplasm. Functionally, probably involved in mitosomal protein import. The chain is Mitochondrial protein import protein mas5 (MAS5) from Encephalitozoon cuniculi (strain GB-M1) (Microsporidian parasite).